A 233-amino-acid chain; its full sequence is Phosducin-like protein C2A9.09 (233 aa).

Residues 58–212 (EDEEDDEFLQ…DIAALKDPQN (155 aa)) enclose the Phosducin domain. The tract at residues 86–233 (FGSVYPISKP…VNDDLDDDFD (148 aa)) is thioredoxin fold. The interval 207-233 (LKDPQNAEDELGKRDSSVNDDLDDDFD) is disordered. Phosphoserine is present on residues S222 and S223. Acidic residues predominate over residues 224–233 (VNDDLDDDFD).

The protein belongs to the phosducin family.

This chain is Phosducin-like protein C2A9.09, found in Schizosaccharomyces pombe (strain 972 / ATCC 24843) (Fission yeast).